A 228-amino-acid polypeptide reads, in one-letter code: C-type lectin domain-containing protein 88 (228 aa).

Residues 1-18 (MQFIFFGTLFSGLLLVCA) form the signal peptide. O-linked (Xyl...) (chondroitin sulfate) serine glycosylation occurs at Ser27. Positions 88–218 (YSDSCYWVET…CTYLFYSICE (131 aa)) constitute a C-type lectin domain. Disulfide bonds link Cys109–Cys217 and Cys188–Cys209. Asn220 carries an N-linked (GlcNAc...) asparagine glycan.

The protein is C-type lectin domain-containing protein 88 of Caenorhabditis elegans.